A 522-amino-acid chain; its full sequence is Semenogelin-2 (522 aa).

The first 23 residues, 1–23 (MKSIILFVLSLLLILEKQAAVMG), serve as a signal peptide directing secretion. Disordered regions lie at residues 26–62 (CGSK…SKGS), 132–158 (GGQA…ISSQ), 272–358 (NLNQ…ERHL), and 379–522 (EEQI…PVST). Polar residues-rich tracts occupy residues 31–40 (QLPSGSSQFP) and 137–158 (RGTQ…ISSQ). A compositionally biased stretch (basic and acidic residues) spans 292–310 (RTEERQLNRGEKSVQKDVS). Positions 325 to 335 (KSQNQVTIHSQ) are enriched in polar residues. Residues 336–345 (GQEHGHKENK) are compositionally biased toward basic and acidic residues. 3 stretches are compositionally biased toward polar residues: residues 379 to 397 (EEQI…SQAQ), 427 to 436 (KDVSQSSTSF), and 446 to 464 (SQIQ…QNAK). Composition is skewed to basic and acidic residues over residues 465–492 (GKSD…ESSE) and 499–522 (TEHE…PVST).

This sequence belongs to the semenogelin family. In terms of assembly, interacts with SERPINA5.

Its subcellular location is the secreted. Functionally, participates in the formation of a gel matrix (sperm coagulum) entrapping the accessory gland secretions and ejaculated spermatozoa. This is Semenogelin-2 (SEMG2) from Hylobates klossii (Kloss's gibbon).